Here is a 577-residue protein sequence, read N- to C-terminus: Proline--tRNA ligase (577 aa).

It belongs to the class-II aminoacyl-tRNA synthetase family. ProS type 1 subfamily. As to quaternary structure, homodimer.

It is found in the cytoplasm. It carries out the reaction tRNA(Pro) + L-proline + ATP = L-prolyl-tRNA(Pro) + AMP + diphosphate. Functionally, catalyzes the attachment of proline to tRNA(Pro) in a two-step reaction: proline is first activated by ATP to form Pro-AMP and then transferred to the acceptor end of tRNA(Pro). As ProRS can inadvertently accommodate and process non-cognate amino acids such as alanine and cysteine, to avoid such errors it has two additional distinct editing activities against alanine. One activity is designated as 'pretransfer' editing and involves the tRNA(Pro)-independent hydrolysis of activated Ala-AMP. The other activity is designated 'posttransfer' editing and involves deacylation of mischarged Ala-tRNA(Pro). The misacylated Cys-tRNA(Pro) is not edited by ProRS. The protein is Proline--tRNA ligase of Helicobacter pylori (strain G27).